The primary structure comprises 423 residues: MAQFIDRRLNGKNKSAVNRQRFMRRYKEQIKESVADAVNRRSITNTETGEDVAIPHKDIKEPLFHQGKGGLRERVHPGNDQFITGDKIERPKGGQGGGGAGDGDASADGEGQDDFVFQISKDEYLDLLFEDLALPNLKKNQVNKITEWKKHRAGYQTAGMPSNISIVRSLQQSLARRTAMSAGKKRLLHELELELERIQNQEPAQKLEEMKLKQEIAELRKAIESVPFIDTFDLRFKNYERKPVPSSQAVMFCLMDVSGSMDQATKDIAKRFYVLLYLFLNRTYENVEVVFIRHHTQAKEVDEHEFFYSQETGGTIVSSALKLMDEIVKARYPVGEWNIYAAQASDGDNWADDSPRCKELLTSKLLPNCQYYAYIEITRRSHQTLWHEYEKLEESFDNFAMKNIRSVEDIFPVFRELFHKETA.

Residues 81–111 (QFITGDKIERPKGGQGGGGAGDGDASADGEG) form a disordered region. The span at 93–102 (GGQGGGGAGD) shows a compositional bias: gly residues.

This sequence belongs to the UPF0229 family.

This is UPF0229 protein VV1_2091 from Vibrio vulnificus (strain CMCP6).